The sequence spans 298 residues: ADP/ATP translocase 2 (298 aa).

N-acetylmethionine is present on Met-1. The Mitochondrial intermembrane segment spans residues 1–7; that stretch reads MTDAAVS. An N-acetylthreonine; in ADP/ATP translocase 2, N-terminally processed modification is found at Thr-2. Residues 6–98 form a Solcar 1 repeat; the sequence is VSFAKDFLAG…FAFKDKYKQI (93 aa). Residue Ser-7 is modified to Phosphoserine. Residues 8–37 form a helical membrane-spanning segment; it reads FAKDFLAGGVAAAISKTAVAPIERVKLLLQ. The residue at position 23 (Lys-23) is an N6-malonyllysine. Residues 38–74 are Mitochondrial matrix-facing; that stretch reads VQHASKQITADKQYKGIIDCVVRIPKEQGVLSFWRGN. Lys-43 bears the N6-succinyllysine mark. Lys-52 is subject to N6,N6,N6-trimethyllysine; alternate. Lys-52 carries the post-translational modification N6,N6-dimethyllysine; alternate. Residue Lys-52 is modified to N6-methyllysine; alternate. The helical transmembrane segment at 75 to 99 threads the bilayer; it reads LANVIRYFPTQALNFAFKDKYKQIF. Residues Arg-80 and Lys-92 each coordinate ADP. N6-malonyllysine occurs at positions 92 and 96. Over 100 to 109 the chain is Mitochondrial intermembrane; the sequence is LGGVDKRTQF. An N6-acetyllysine; alternate modification is found at Lys-105. Lys-105 is subject to N6-succinyllysine; alternate. Residues 110-130 form a helical membrane-spanning segment; sequence WRYFAGNLASGGAAGATSLCF. Solcar repeat units lie at residues 111-201 and 212-297; these read RYFA…AKGM and ISWM…IKKF. At 131–178 the chain is on the mitochondrial matrix side; it reads VYPLDFARTRLAADVGKAGAEREFRGLGDCLVKIYKSDGIRGLYQGFN. The residue at position 147 (Lys-147) is an N6-methyllysine; alternate. Lys-147 is modified (N6-acetyllysine; alternate). An N6-succinyllysine; alternate modification is found at Lys-147. Residue Lys-147 is modified to N6-malonyllysine; alternate. An N6-acetyllysine mark is found at Lys-163 and Lys-166. The chain crosses the membrane as a helical span at residues 179–199; sequence VSVQGIIIYRAAYFGIYDTAK. The Mitochondrial intermembrane portion of the chain corresponds to 200 to 210; it reads GMLPDPKNTHI. A helical membrane pass occupies residues 211 to 231; the sequence is FISWMIAQSVTAVAGLTSYPF. The Mitochondrial matrix portion of the chain corresponds to 232–273; the sequence is DTVRRRMMMQSGRKGTDIMYTGTLDCWRKIARDEGAKAFFKG. Arg-235 lines the ADP pocket. The tract at residues 235–240 is important for transport activity; the sequence is RRRMMM. Positions 235–240 match the Nucleotide carrier signature motif motif; that stretch reads RRRMMM. Residue Lys-268 is modified to N6-acetyllysine; alternate. Lys-268 carries the N6-succinyllysine; alternate modification. A helical membrane pass occupies residues 274 to 291; that stretch reads AWSNVLRGMGGAFVLVLY. Over 292–298 the chain is Mitochondrial intermembrane; the sequence is DEIKKFT.

The protein belongs to the mitochondrial carrier (TC 2.A.29) family. In terms of assembly, monomer. Component of the MMXD complex, which includes CIAO1, ERCC2, CIAO2B, MMS19 and SLC25A5/ANT2. Interacts with AK4. Interacts with TIMM44; leading to inhibit the presequence translocase TIMM23, thereby promoting stabilization of PINK1. Post-translationally, trimethylated by ANTKMT at Lys-52.

It localises to the mitochondrion inner membrane. The protein localises to the membrane. The enzyme catalyses ADP(in) + ATP(out) = ADP(out) + ATP(in). The catalysed reaction is H(+)(in) = H(+)(out). With respect to regulation, the matrix-open state (m-state) is inhibited by the membrane-permeable bongkrekic acid (BKA). The cytoplasmic-open state (c-state) is inhibited by the membrane-impermeable toxic inhibitor carboxyatractyloside (CATR). Proton transporter activity is inhibited by ADP:ATP antiporter activity. Its function is as follows. ADP:ATP antiporter that mediates import of ADP into the mitochondrial matrix for ATP synthesis, and export of ATP out to fuel the cell. Cycles between the cytoplasmic-open state (c-state) and the matrix-open state (m-state): operates by the alternating access mechanism with a single substrate-binding site intermittently exposed to either the cytosolic (c-state) or matrix (m-state) side of the inner mitochondrial membrane. In addition to its ADP:ATP antiporter activity, also involved in mitochondrial uncoupling and mitochondrial permeability transition pore (mPTP) activity. Plays a role in mitochondrial uncoupling by acting as a proton transporter: proton transport uncouples the proton flows via the electron transport chain and ATP synthase to reduce the efficiency of ATP production and cause mitochondrial thermogenesis. Proton transporter activity is inhibited by ADP:ATP antiporter activity, suggesting that SLC25A5/ANT2 acts as a master regulator of mitochondrial energy output by maintaining a delicate balance between ATP production (ADP:ATP antiporter activity) and thermogenesis (proton transporter activity). Proton transporter activity requires free fatty acids as cofactor, but does not transport it. Probably mediates mitochondrial uncoupling in tissues that do not express UCP1. Also plays a key role in mPTP opening, a non-specific pore that enables free passage of the mitochondrial membranes to solutes of up to 1.5 kDa, and which contributes to cell death. It is however unclear if SLC25A5/ANT2 constitutes a pore-forming component of mPTP or regulates it. Acts as a regulator of mitophagy independently of ADP:ATP antiporter activity: promotes mitophagy via interaction with TIMM44, leading to inhibit the presequence translocase TIMM23, thereby promoting stabilization of PINK1. As part of the mitotic spindle-associated MMXD complex it may play a role in chromosome segregation. This chain is ADP/ATP translocase 2, found in Bos taurus (Bovine).